Consider the following 186-residue polypeptide: Peptidoglycan-recognition protein SD (186 aa).

Residues methionine 1–glycine 18 form the signal peptide. The 123-residue stretch at alanine 47–glycine 169 folds into the N-acetylmuramoyl-L-alanine amidase domain. Cysteine 57 and cysteine 63 form a disulfide bridge. An N-linked (GlcNAc...) asparagine glycan is attached at asparagine 181.

Belongs to the N-acetylmuramoyl-L-alanine amidase 2 family.

It is found in the secreted. Peptidoglycan-recognition protein that plays a key role in innate immunity by binding to peptidoglycans (PGN) of Gram-positive bacteria and activating the Toll pathway. Has no activity against on Gram-negative bacteria and fungi. Shows some partial redundancy with PRPGP-SA in Gram-positive bacteria recognition. May act by activating the proteolytic cleavage of Spatzle and the subsequent activation of Toll pathway. Recognizes S.aureus PGN. The polypeptide is Peptidoglycan-recognition protein SD (PGRP-SD) (Drosophila simulans (Fruit fly)).